A 284-amino-acid chain; its full sequence is MTVRKPEWLKVRILSEDLNRMEAFLKNMALNTVCQSANCPNMGECFARRTATFMIMGNICTRNCRFCAVEKGHPQPLDEEEPRRVAEAARRLGLRHVVVTSVTRDDLPDGGASHFAKTIYELKKLPGVTVEVLVPDFMGNEEAIRTVVEAKPDVINHNVETVPRLYSRVRPKADYIRSLNLLKKVKELDPLILTKSGIMVGLGETEEEVIEVMKDLRDIDCDMMTIGQYLRPSHKHIEVAEYVTPEQFKRYEEIGYKLGFKHVASGPLVRSSYHADVGLSLARG.

7 residues coordinate [4Fe-4S] cluster: C34, C39, C45, C60, C64, C67, and S272. One can recognise a Radical SAM core domain in the interval F46 to K261.

Belongs to the radical SAM superfamily. Lipoyl synthase family. Requires [4Fe-4S] cluster as cofactor.

The protein localises to the cytoplasm. The enzyme catalyses [[Fe-S] cluster scaffold protein carrying a second [4Fe-4S](2+) cluster] + N(6)-octanoyl-L-lysyl-[protein] + 2 oxidized [2Fe-2S]-[ferredoxin] + 2 S-adenosyl-L-methionine + 4 H(+) = [[Fe-S] cluster scaffold protein] + N(6)-[(R)-dihydrolipoyl]-L-lysyl-[protein] + 4 Fe(3+) + 2 hydrogen sulfide + 2 5'-deoxyadenosine + 2 L-methionine + 2 reduced [2Fe-2S]-[ferredoxin]. The protein operates within protein modification; protein lipoylation via endogenous pathway; protein N(6)-(lipoyl)lysine from octanoyl-[acyl-carrier-protein]: step 2/2. Catalyzes the radical-mediated insertion of two sulfur atoms into the C-6 and C-8 positions of the octanoyl moiety bound to the lipoyl domains of lipoate-dependent enzymes, thereby converting the octanoylated domains into lipoylated derivatives. The polypeptide is Lipoyl synthase (Caldanaerobacter subterraneus subsp. tengcongensis (strain DSM 15242 / JCM 11007 / NBRC 100824 / MB4) (Thermoanaerobacter tengcongensis)).